A 226-amino-acid polypeptide reads, in one-letter code: Enolase-phosphatase E1 (226 aa).

The protein belongs to the HAD-like hydrolase superfamily. MasA/MtnC family. As to quaternary structure, monomer. The cofactor is Mg(2+).

The catalysed reaction is 5-methylsulfanyl-2,3-dioxopentyl phosphate + H2O = 1,2-dihydroxy-5-(methylsulfanyl)pent-1-en-3-one + phosphate. It participates in amino-acid biosynthesis; L-methionine biosynthesis via salvage pathway; L-methionine from S-methyl-5-thio-alpha-D-ribose 1-phosphate: step 3/6. It functions in the pathway amino-acid biosynthesis; L-methionine biosynthesis via salvage pathway; L-methionine from S-methyl-5-thio-alpha-D-ribose 1-phosphate: step 4/6. Its function is as follows. Bifunctional enzyme that catalyzes the enolization of 2,3-diketo-5-methylthiopentyl-1-phosphate (DK-MTP-1-P) into the intermediate 2-hydroxy-3-keto-5-methylthiopentenyl-1-phosphate (HK-MTPenyl-1-P), which is then dephosphorylated to form the acireductone 1,2-dihydroxy-3-keto-5-methylthiopentene (DHK-MTPene). The protein is Enolase-phosphatase E1 of Alcanivorax borkumensis (strain ATCC 700651 / DSM 11573 / NCIMB 13689 / SK2).